The chain runs to 297 residues: PAK4-inhibitor INKA2 (297 aa).

Disordered regions lie at residues 82 to 109 (GRGP…PSHR), 175 to 200 (LEKG…PQEL), and 234 to 285 (TPMV…LEHS). Residues 92–102 (SPSSQPSLGSS) show a composition bias toward low complexity. Residues 137–180 (EPDDWTSTLMSRGRNRQPLVLGDNVFADLVGNWLDLPELEKGGE) are inka box. The segment covering 244–253 (RSQKVKKRSL) has biased composition (basic residues).

Belongs to the INKA family. Interacts with PAK4.

The protein resides in the nucleus. Functionally, inhibitor of the serine/threonine-protein kinase PAK4. Acts by binding PAK4 in a substrate-like manner, inhibiting the protein kinase activity. In Homo sapiens (Human), this protein is PAK4-inhibitor INKA2.